The following is a 521-amino-acid chain: MVDSTIRLVATIFLISLTQQIEVCNKAQQQGPYTLVDYQEKPLNISRIQIKVVKTSVATKGLNFHIGYRAVWRGYCYNGGSLDKNTGCYNDLIPKSPTESELRTWSKSQKCCTGPDAVDAWGSDARICWAEWKMELCHTAKELKKYSNNNHFAYHTCNLSWRCGLKSTHIEVRLQASGGLVSMVAVMPNGTLIPIEGTRPTYWTEDSFAYLYDPAGTEKKTESTFLWCFKEHIRPTTELSGAVYDTHYLGGTYDKNPQFNYYCRDNGYYFELPANRLVCLPTSCYKREGAIVNTMHPNTWKVSEKLHSASQFDVNNVVHSLVYETEGLRLALSQLDHRFATLSRLFNRLTQSLAKIDDRLLGTLLGQDVSSKFISPTKFMLSPCLSTPEGDSNCHNHSIYRDGRWVHNSDPTQCFSLSKSQPVDLYSFKELWLPQLLDVNVKGVVADEEGWSFVAQSKQALIDTMTYTKNGGKGTSLEDVLGYPSGWINGKLQGLLLNGAISWVVVIGVVLVGVCLMRRVF.

Positions 1 to 20 (MVDSTIRLVATIFLISLTQQ) are cleaved as a signal peptide. Residues Asn-44, Asn-158, Asn-189, and Asn-396 are each glycosylated (N-linked (GlcNAc...) asparagine; by host). A helical transmembrane segment spans residues 501–517 (ISWVVVIGVVLVGVCLM).

Homooligomer; disulfide-linked (possibly homodimer).

It is found in the virion membrane. Functionally, attaches the virus to host cellular receptor and later induces fusion of virion with host membrane. This Dhori virus (strain Indian/1313/61) (Dho) protein is Envelope glycoprotein (P4).